The primary structure comprises 255 residues: 3-oxoacyl-[acyl-carrier-protein] reductase MabA (255 aa).

NADP(+)-binding positions include 33 to 35, Arg-55, 69 to 70, Gly-98, Tyr-161, Lys-165, Ile-194, and Arg-205; these read RGI and DV. Tyr-161 serves as the catalytic Proton acceptor.

Belongs to the short-chain dehydrogenases/reductases (SDR) family. As to quaternary structure, homotetramer.

The protein localises to the secreted. It localises to the cell wall. It catalyses the reaction a (3R)-hydroxyacyl-[ACP] + NADP(+) = a 3-oxoacyl-[ACP] + NADPH + H(+). It functions in the pathway lipid metabolism; mycolic acid biosynthesis. Functionally, part of the mycobacterial fatty acid elongation system FAS-II, which is involved in mycolic acid biosynthesis. Catalyzes the NADPH-dependent reduction of beta-ketoacyl derivatives, the second step of the FAS-II elongation cycle. This is 3-oxoacyl-[acyl-carrier-protein] reductase MabA from Mycobacterium avium.